The primary structure comprises 406 residues: Protein ALP1-like (406 aa).

A Nuclear localization signal motif is present at residues 8-15; that stretch reads KKKKRAEK. The DDE Tnp4 domain occupies 187 to 353; the sequence is IDITHIVMNL…IIFVCCLLHN (167 aa). Residues aspartate 188, aspartate 240, and aspartate 279 each contribute to the a divalent metal cation site.

This sequence belongs to the HARBI1 family. The cofactor is a divalent metal cation.

Its subcellular location is the nucleus. Functionally, transposase-derived protein that may have nuclease activity. This Arabidopsis thaliana (Mouse-ear cress) protein is Protein ALP1-like.